Here is a 772-residue protein sequence, read N- to C-terminus: MEYTYQYSWIIPFIPLPVPILIGMGLLLFPTATKNHRRVWSFPSILLLSMVMLLSVYLSIQQINRSFIYQYVWSWTINNDFSLEFGHLIDPLASIMLILITTVGILVLFYSDNYMSHDQGYLRFFAYLSFFNTSMLGLVTSSNLIQIYIFWELVGMCSYLLIGFWFTRPIAATACQKAFVTNRVGDFGLLLGILGLYWITGSFEFRDLFEIVNNLIDNNNQVHFLFVTLCSFLLFAGAVAKSAQFPLHVWLPDAMEGPTPISALIHAATMVAAGIFLVARLLPLFVITPYIMNLISLIGIITVLLGATLALAQKDIKRSLAYSTMSQLGYMMLALGMGSYRAALFHLITHAYSKALLFLGSGSIIHSMESIVGYSPDKSQNMVLMGGLKKHVPITKTAFLVGTLSLCGIPPLACFWSKDEILNDSWLYSPIFAIIACSTAGFTAFYMFRVYLLTFDGHLNVHFQNYSGQKSSSVYSISLWGKQVPKRIQNPFCLLNLLTMNNNESTSFFWNNKCKLDGNVKKRIRPFITVTHFPNRKTFSYPHESDNTMLFSLFVLVLFTLFVAAIGIPFNQEGSDCDILSKLLNPSINLLHQNSNNFTDWYEFVTNASFSVSIALLGIFIATFLYKPIYSSLQNFNLLNSFYKRSANRVMWDKIQNWIYDWSYNRGYIDSFYTISLTGGIRGLAELSHFFDRRVIDGILNGFGLTSFFLGESLKYFGGGRISSYLLLYSIFIFIFLLMDSFFTNLPFFVLCQFLDSSFSMSISGFLLYENF.

Transmembrane regions (helical) follow at residues 9–29, 40–60, 89–109, 125–145, 147–167, 185–205, 220–240, 259–279, 290–312, 328–348, 355–375, 397–417, 426–446, 550–570, 604–624, and 731–751; these read WIIP…LLLF, WSFP…YLSI, IDPL…LVLF, FAYL…SNLI, IYIF…FWFT, GDFG…SFEF, NQVH…GAVA, TPIS…FLVA, YIMN…LALA, LGYM…FHLI, ALLF…VGYS, TAFL…CFWS, WLYS…TAFY, LFSL…GIPF, FVTN…IATF, and IFIF…FFVL.

The protein belongs to the complex I subunit 5 family. As to quaternary structure, NDH is composed of at least 16 different subunits, 5 of which are encoded in the nucleus.

It is found in the plastid. Its subcellular location is the chloroplast thylakoid membrane. The catalysed reaction is a plastoquinone + NADH + (n+1) H(+)(in) = a plastoquinol + NAD(+) + n H(+)(out). It catalyses the reaction a plastoquinone + NADPH + (n+1) H(+)(in) = a plastoquinol + NADP(+) + n H(+)(out). In terms of biological role, NDH shuttles electrons from NAD(P)H:plastoquinone, via FMN and iron-sulfur (Fe-S) centers, to quinones in the photosynthetic chain and possibly in a chloroplast respiratory chain. The immediate electron acceptor for the enzyme in this species is believed to be plastoquinone. Couples the redox reaction to proton translocation, and thus conserves the redox energy in a proton gradient. The polypeptide is NAD(P)H-quinone oxidoreductase subunit 5, chloroplastic (ndhF) (Oenothera argillicola (Appalachian evening primrose)).